The following is an 880-amino-acid chain: Leucine--tRNA ligase (880 aa).

Residues 46-56 carry the 'HIGH' region motif; sequence PYPSGALHMGH. Residues 638–642 carry the 'KMSKS' region motif; sequence KMSKS. Lys641 contributes to the ATP binding site.

It belongs to the class-I aminoacyl-tRNA synthetase family.

The protein localises to the cytoplasm. It catalyses the reaction tRNA(Leu) + L-leucine + ATP = L-leucyl-tRNA(Leu) + AMP + diphosphate. The protein is Leucine--tRNA ligase of Xanthomonas euvesicatoria pv. vesicatoria (strain 85-10) (Xanthomonas campestris pv. vesicatoria).